Reading from the N-terminus, the 652-residue chain is Acetyl-coenzyme A synthetase (652 aa).

Residues 189–192 (RGDK) and threonine 311 contribute to the CoA site. ATP is bound by residues 387–389 (GEP), 411–416 (DTWWQT), aspartate 500, and arginine 515. Serine 523 contributes to the CoA binding site. Residue arginine 526 coordinates ATP. Mg(2+)-binding residues include histidine 539 and valine 542. Residue arginine 584 coordinates CoA. Lysine 609 carries the post-translational modification N6-acetyllysine.

Belongs to the ATP-dependent AMP-binding enzyme family. Mg(2+) serves as cofactor. Acetylated. Deacetylation by the SIR2-homolog deacetylase activates the enzyme.

The enzyme catalyses acetate + ATP + CoA = acetyl-CoA + AMP + diphosphate. In terms of biological role, catalyzes the conversion of acetate into acetyl-CoA (AcCoA), an essential intermediate at the junction of anabolic and catabolic pathways. AcsA undergoes a two-step reaction. In the first half reaction, AcsA combines acetate with ATP to form acetyl-adenylate (AcAMP) intermediate. In the second half reaction, it can then transfer the acetyl group from AcAMP to the sulfhydryl group of CoA, forming the product AcCoA. This chain is Acetyl-coenzyme A synthetase, found in Bartonella bacilliformis (strain ATCC 35685 / KC583 / Herrer 020/F12,63).